Here is a 214-residue protein sequence, read N- to C-terminus: Urease accessory protein UreG 2 (214 aa).

22 to 29 contacts GTP; that stretch reads GPVGSGKT.

It belongs to the SIMIBI class G3E GTPase family. UreG subfamily. As to quaternary structure, homodimer. UreD, UreF and UreG form a complex that acts as a GTP-hydrolysis-dependent molecular chaperone, activating the urease apoprotein by helping to assemble the nickel containing metallocenter of UreC. The UreE protein probably delivers the nickel.

The protein localises to the cytoplasm. In terms of biological role, facilitates the functional incorporation of the urease nickel metallocenter. This process requires GTP hydrolysis, probably effectuated by UreG. In Bradyrhizobium sp. (strain BTAi1 / ATCC BAA-1182), this protein is Urease accessory protein UreG 2.